We begin with the raw amino-acid sequence, 81 residues long: Sec-independent protein translocase protein TatA (81 aa).

The helical transmembrane segment at methionine 1–glycine 21 threads the bilayer. Positions asparagine 45–alanine 81 are disordered. Positions alanine 59–serine 75 are enriched in basic and acidic residues.

This sequence belongs to the TatA/E family. As to quaternary structure, the Tat system comprises two distinct complexes: a TatABC complex, containing multiple copies of TatA, TatB and TatC subunits, and a separate TatA complex, containing only TatA subunits. Substrates initially bind to the TatABC complex, which probably triggers association of the separate TatA complex to form the active translocon.

The protein resides in the cell inner membrane. Part of the twin-arginine translocation (Tat) system that transports large folded proteins containing a characteristic twin-arginine motif in their signal peptide across membranes. TatA could form the protein-conducting channel of the Tat system. The chain is Sec-independent protein translocase protein TatA from Sulfurimonas denitrificans (strain ATCC 33889 / DSM 1251) (Thiomicrospira denitrificans (strain ATCC 33889 / DSM 1251)).